The sequence spans 409 residues: Runt-related transcription factor 3 (409 aa).

Disordered stretches follow at residues 1-51, 177-248, and 346-409; these read MRIP…RTRP, GPRE…QFDR, and AGGG…WRPY. Polar residues predominate over residues 7-17; that stretch reads PSTSRRFTPPS. The Runt domain occupies 55-183; it reads SMVDVLADHA…TVDGPREPRR (129 aa). Residues 187–204 are compositionally biased toward basic and acidic residues; it reads KIEDQTKAFPDRFGDLRM. Lys193 is covalently cross-linked (Glycyl lysine isopeptide (Lys-Gly) (interchain with G-Cter in SUMO2)). Residues 207–238 show a composition bias toward polar residues; sequence TPSTPSPRGSLSTTSHFSSQAQTPIQGSSDLN. At Ser241 the chain carries Phosphoserine. Composition is skewed to polar residues over residues 355–376 and 387–396; these read RMLT…NPSL and SHSNSPTALS. Residues 400 to 409 are compositionally biased toward basic and acidic residues; that stretch reads RMDEAVWRPY.

Heterodimer with CBFB. RUNX3 binds DNA as a monomer and through the Runt domain. DNA-binding is increased by heterodimerization. Interacts with TLE1 and SUV39H1. The tyrosine phosphorylated form (via runt domain) interacts with SRC (via protein kinase domain). Interacts with FYN and LCK. Interacts with FOXP3. Interacts with ZFHX3. Interacts with TBX21. Post-translationally, phosphorylated on tyrosine residues by SRC. Phosphorylated by LCK and FYN.

It localises to the nucleus. The protein localises to the cytoplasm. In terms of biological role, forms the heterodimeric complex core-binding factor (CBF) with CBFB. RUNX members modulate the transcription of their target genes through recognizing the core consensus binding sequence 5'-TGTGGT-3', or very rarely, 5'-TGCGGT-3', within their regulatory regions via their runt domain, while CBFB is a non-DNA-binding regulatory subunit that allosterically enhances the sequence-specific DNA-binding capacity of RUNX. The heterodimers bind to the core site of a number of enhancers and promoters, including murine leukemia virus, polyomavirus enhancer, T-cell receptor enhancers, LCK, IL3 and GM-CSF promoters. May be involved in the control of cellular proliferation and/or differentiation. In association with ZFHX3, up-regulates CDKN1A promoter activity following TGF-beta stimulation. CBF complexes repress ZBTB7B transcription factor during cytotoxic (CD8+) T cell development. They bind to RUNX-binding sequence within the ZBTB7B locus acting as transcriptional silencer and allowing for cytotoxic T cell differentiation. CBF complexes binding to the transcriptional silencer is essential for recruitment of nuclear protein complexes that catalyze epigenetic modifications to establish epigenetic ZBTB7B silencing. Necessary for the development and survival of sensory neurons expressing parvalbumin. The protein is Runt-related transcription factor 3 (Runx3) of Mus musculus (Mouse).